The primary structure comprises 650 residues: ATP-dependent zinc metalloprotease FtsH (650 aa).

Over 1–10 (MKTKKSKSTL) the chain is Cytoplasmic. Residues 11-31 (WFWLIILLAIIVTIIIIAVTV) form a helical membrane-spanning segment. Residues 32-123 (KGTTQVISDA…LVYQGSVGMA (92 aa)) are Extracellular-facing. The helical transmembrane segment at 124 to 144 (LLVSLAPLLIYVLLFGGIIWF) threads the bilayer. At 145-650 (MMKSSSGAGA…DIKVEDLDID (506 aa)) the chain is on the cytoplasmic side. Residue 217 to 224 (GPPGTGKT) coordinates ATP. His-437 is a Zn(2+) binding site. Residue Glu-438 is part of the active site. 2 residues coordinate Zn(2+): His-441 and Asp-515.

In the central section; belongs to the AAA ATPase family. This sequence in the C-terminal section; belongs to the peptidase M41 family. In terms of assembly, homohexamer. Requires Zn(2+) as cofactor.

It is found in the cell membrane. Its function is as follows. Acts as a processive, ATP-dependent zinc metallopeptidase for both cytoplasmic and membrane proteins. Plays a role in the quality control of integral membrane proteins. The chain is ATP-dependent zinc metalloprotease FtsH from Mesoplasma florum (strain ATCC 33453 / NBRC 100688 / NCTC 11704 / L1) (Acholeplasma florum).